The primary structure comprises 353 residues: Protein RecA (353 aa).

Residue 80–87 (GPESSGKT) participates in ATP binding.

This sequence belongs to the RecA family.

The protein localises to the cytoplasm. Functionally, can catalyze the hydrolysis of ATP in the presence of single-stranded DNA, the ATP-dependent uptake of single-stranded DNA by duplex DNA, and the ATP-dependent hybridization of homologous single-stranded DNAs. It interacts with LexA causing its activation and leading to its autocatalytic cleavage. The protein is Protein RecA of Chlorobium chlorochromatii (strain CaD3).